The primary structure comprises 182 residues: Protein SYM1 (182 aa).

Helical transmembrane passes span Thr-51–Tyr-70, Leu-98–Gly-118, and Leu-135–Val-155.

Belongs to the peroxisomal membrane protein PXMP2/4 family.

It localises to the mitochondrion inner membrane. May be involved in cellular response to stress. Required to maintain mitochondrial DNA (mtDNA) integrity and stability. This chain is Protein SYM1 (SYM1), found in Eremothecium gossypii (strain ATCC 10895 / CBS 109.51 / FGSC 9923 / NRRL Y-1056) (Yeast).